The sequence spans 456 residues: GTPase Der (456 aa).

EngA-type G domains follow at residues 4 to 169 (PIVA…PSKE) and 178 to 353 (IQLA…EQHR). GTP contacts are provided by residues 10–17 (GRPNVGKS), 57–61 (DTGGL), 120–123 (NKCE), 184–191 (GRPNVGKS), 231–235 (DTAGI), and 296–299 (NKWD). The region spanning 354–439 (RRVSTSVVNE…PLKLFWRGKQ (86 aa)) is the KH-like domain.

It belongs to the TRAFAC class TrmE-Era-EngA-EngB-Septin-like GTPase superfamily. EngA (Der) GTPase family. In terms of assembly, associates with the 50S ribosomal subunit.

GTPase that plays an essential role in the late steps of ribosome biogenesis. The protein is GTPase Der of Prochlorococcus marinus (strain MIT 9211).